Here is a 462-residue protein sequence, read N- to C-terminus: Elongation factor 1-alpha (462 aa).

Gly2 carries the post-translational modification Blocked amino end (Gly). Residues Lys5 to Thr242 form the tr-type G domain. Residues Gly14–Ser21 form a G1 region. A GTP-binding site is contributed by Gly14–Ser21. Position 36 is an N6,N6,N6-trimethyllysine (Lys36). An N6-methyllysine modification is found at Lys55. The tract at residues Gly70 to Asp74 is G2. Residue Lys79 is modified to N6,N6,N6-trimethyllysine. Positions Asp91–Gly94 are G3. GTP-binding positions include Asp91–His95 and Asn153–Asp156. The tract at residues Asn153–Asp156 is G4. Residues Ser194–Trp196 form a G5 region. 2 positions are modified to N6,N6,N6-trimethyllysine: Lys219 and Lys318. At Glu374 the chain carries 5-glutamyl glycerylphosphorylethanolamine.

The protein belongs to the TRAFAC class translation factor GTPase superfamily. Classic translation factor GTPase family. EF-Tu/EF-1A subfamily. The N-terminus is blocked.

The protein localises to the cytoplasm. In terms of biological role, this protein promotes the GTP-dependent binding of aminoacyl-tRNA to the A-site of ribosomes during protein biosynthesis. The chain is Elongation factor 1-alpha from Artemia salina (Brine shrimp).